We begin with the raw amino-acid sequence, 353 residues long: Dihydroorotate dehydrogenase (quinone) (353 aa).

FMN is bound by residues 66-70 (AGFDK) and Thr90. Lys70 lines the substrate pocket. Residue 115-119 (NRMGF) participates in substrate binding. FMN contacts are provided by Asn143 and Asn176. Residue Asn176 participates in substrate binding. Catalysis depends on Ser179, which acts as the Nucleophile. Asn181 is a substrate binding site. Positions 212 and 240 each coordinate FMN. Residue 241–242 (NT) coordinates substrate. FMN-binding positions include Gly264, Gly293, and 314-315 (YT).

Belongs to the dihydroorotate dehydrogenase family. Type 2 subfamily. Monomer. It depends on FMN as a cofactor.

It localises to the cell membrane. It carries out the reaction (S)-dihydroorotate + a quinone = orotate + a quinol. The protein operates within pyrimidine metabolism; UMP biosynthesis via de novo pathway; orotate from (S)-dihydroorotate (quinone route): step 1/1. In terms of biological role, catalyzes the conversion of dihydroorotate to orotate with quinone as electron acceptor. The protein is Dihydroorotate dehydrogenase (quinone) of Mycolicibacterium gilvum (strain PYR-GCK) (Mycobacterium gilvum (strain PYR-GCK)).